A 409-amino-acid polypeptide reads, in one-letter code: MSDIKKVVLAYSGGLDTSVILKWLQDTYQCEVVTFTADLGQGEELEPARQKALQFGIKPEQIYIDDLREEFVRDFVFPMFRANTVYEGEYLLGTSIARPLIAKRLIEIVNATGADAICHGATGKGNDQVRFELGAYALKPDVKVIAPWREWDLLSREKLLAYAESHGIPIDMKHRQGGSPYSMDANLLHISYEGRHLEDPSAEAEEDMWRWTVSPEKAPDAAEYIELTYAKGDVVAIDGQQMPAHEVLAKLNELGGKHGIGRLDLVENRYVGMKSRGCYETPGGTILLKAHRAIESITLDREVAHLKDDLMPRYASLIYNGYWWAPERRALQVLIDHTQAHVNGTVRLKLYKGNVIVVGRDSKNDSLFDSTIATFEDDAGAYDQKDAGGFIKLNALRMRIAAKLDARRK.

ATP-binding positions include 10 to 18 and alanine 37; that span reads AYSGGLDTS. L-citrulline is bound by residues tyrosine 90 and serine 95. Residue glycine 120 participates in ATP binding. The L-aspartate site is built by threonine 122, asparagine 126, and aspartate 127. Asparagine 126 is an L-citrulline binding site. L-citrulline contacts are provided by arginine 130, serine 182, serine 191, glutamate 267, and tyrosine 279.

This sequence belongs to the argininosuccinate synthase family. Type 1 subfamily. Homotetramer.

The protein localises to the cytoplasm. It carries out the reaction L-citrulline + L-aspartate + ATP = 2-(N(omega)-L-arginino)succinate + AMP + diphosphate + H(+). Its pathway is amino-acid biosynthesis; L-arginine biosynthesis; L-arginine from L-ornithine and carbamoyl phosphate: step 2/3. This is Argininosuccinate synthase from Thiobacillus denitrificans (strain ATCC 25259 / T1).